The chain runs to 572 residues: Urease subunit alpha (572 aa).

Residues 136 to 572 (GGIDTHIHFI…VPLGQRYFLF (437 aa)) form the Urease domain. His141, His143, and Lys224 together coordinate Ni(2+). Residue Lys224 is modified to N6-carboxylysine. His226 contributes to the substrate binding site. The Ni(2+) site is built by His253 and His279. The Proton donor role is filled by His327. Residue Asp367 participates in Ni(2+) binding.

The protein belongs to the metallo-dependent hydrolases superfamily. Urease alpha subunit family. Heterotrimer of UreA (gamma), UreB (beta) and UreC (alpha) subunits. Three heterotrimers associate to form the active enzyme. It depends on Ni cation as a cofactor. In terms of processing, carboxylation allows a single lysine to coordinate two nickel ions.

It is found in the cytoplasm. It carries out the reaction urea + 2 H2O + H(+) = hydrogencarbonate + 2 NH4(+). It functions in the pathway nitrogen metabolism; urea degradation; CO(2) and NH(3) from urea (urease route): step 1/1. The polypeptide is Urease subunit alpha (Haemophilus influenzae (strain ATCC 51907 / DSM 11121 / KW20 / Rd)).